We begin with the raw amino-acid sequence, 102 residues long: UPF0235 protein msl4154 (102 aa).

It belongs to the UPF0235 family.

This is UPF0235 protein msl4154 from Mesorhizobium japonicum (strain LMG 29417 / CECT 9101 / MAFF 303099) (Mesorhizobium loti (strain MAFF 303099)).